We begin with the raw amino-acid sequence, 427 residues long: Enolase (427 aa).

Position 162 (Q162) interacts with (2R)-2-phosphoglycerate. The Proton donor role is filled by E204. Mg(2+) is bound by residues D241, E282, and D309. 4 residues coordinate (2R)-2-phosphoglycerate: K334, R363, S364, and K385. Residue K334 is the Proton acceptor of the active site.

Belongs to the enolase family. It depends on Mg(2+) as a cofactor.

It localises to the cytoplasm. Its subcellular location is the secreted. The protein resides in the cell surface. The enzyme catalyses (2R)-2-phosphoglycerate = phosphoenolpyruvate + H2O. It functions in the pathway carbohydrate degradation; glycolysis; pyruvate from D-glyceraldehyde 3-phosphate: step 4/5. Functionally, catalyzes the reversible conversion of 2-phosphoglycerate (2-PG) into phosphoenolpyruvate (PEP). It is essential for the degradation of carbohydrates via glycolysis. This is Enolase from Frankia alni (strain DSM 45986 / CECT 9034 / ACN14a).